We begin with the raw amino-acid sequence, 168 residues long: Ribosome rescue factor SmrB (168 aa).

Residues 92–167 enclose the Smr domain; the sequence is LDLHGLTKEQ…GDAAILILFE (76 aa).

It belongs to the SmrB family. Associates with collided ribosomes, but not with correctly translating polysomes.

In terms of biological role, acts as a ribosome collision sensor. Detects stalled/collided disomes (pairs of ribosomes where the leading ribosome is stalled and a second ribosome has collided with it) and endonucleolytically cleaves mRNA at the 5' boundary of the stalled ribosome. Stalled/collided disomes form a new interface (primarily via the 30S subunits) that binds SmrB. Cleaved mRNA becomes available for tmRNA ligation, leading to ribosomal subunit dissociation and rescue of stalled ribosomes. The chain is Ribosome rescue factor SmrB from Pasteurella multocida (strain Pm70).